Consider the following 290-residue polypeptide: 33 kDa chaperonin (290 aa).

Intrachain disulfides connect Cys-236/Cys-238 and Cys-269/Cys-272.

Belongs to the HSP33 family. Under oxidizing conditions two disulfide bonds are formed involving the reactive cysteines. Under reducing conditions zinc is bound to the reactive cysteines and the protein is inactive.

Its subcellular location is the cytoplasm. Functionally, redox regulated molecular chaperone. Protects both thermally unfolding and oxidatively damaged proteins from irreversible aggregation. Plays an important role in the bacterial defense system toward oxidative stress. The sequence is that of 33 kDa chaperonin from Brevibacillus brevis (strain 47 / JCM 6285 / NBRC 100599).